Here is a 364-residue protein sequence, read N- to C-terminus: Pre-small/secreted glycoprotein (364 aa).

The N-terminal stretch at 1–32 (MGVTGILQLPRDRFKRTSFFLWVIILFQRTFS) is a signal peptide. An N-linked (GlcNAc...) asparagine; by host glycan is attached at Asn40. Disulfide bonds link Cys108–Cys135 and Cys121–Cys147. Residues Asn204, Asn228, Asn238, Asn257, and Asn268 are each glycosylated (N-linked (GlcNAc...) asparagine; by host).

Belongs to the filoviruses glycoprotein family. Homodimer; disulfide-linked. The homodimers are linked by two disulfide bonds in a parallel orientation. As to quaternary structure, monomer. Post-translationally, this precursor is processed into mature sGP and delta-peptide by host furin or furin-like proteases. The cleavage site corresponds to the furin optimal cleavage sequence [KR]-X-[KR]-R. N-glycosylated. In terms of processing, O-glycosylated.

The protein resides in the secreted. Seems to possess an anti-inflammatory activity as it can reverse the barrier-decreasing effects of TNF alpha. Might therefore contribute to the lack of inflammatory reaction seen during infection in spite the of extensive necrosis and massive virus production. Does not seem to be involved in activation of primary macrophages. Does not seem to interact specifically with neutrophils. Functionally, viroporin that permeabilizes mammalian cell plasma membranes. It acts by altering permeation of ionic compounds and small molecules. This activity may lead to viral enterotoxic activity. This Zaire ebolavirus (strain Gabon-94) (ZEBOV) protein is Pre-small/secreted glycoprotein (GP).